The following is a 322-amino-acid chain: Aspartate carbamoyltransferase catalytic subunit (322 aa).

Carbamoyl phosphate-binding residues include Arg65 and Thr66. Lys93 is a binding site for L-aspartate. Positions 115, 143, and 146 each coordinate carbamoyl phosphate. L-aspartate contacts are provided by Arg176 and Arg230. Carbamoyl phosphate contacts are provided by Gly271 and Pro272.

This sequence belongs to the aspartate/ornithine carbamoyltransferase superfamily. ATCase family. In terms of assembly, heterododecamer (2C3:3R2) of six catalytic PyrB chains organized as two trimers (C3), and six regulatory PyrI chains organized as three dimers (R2).

It catalyses the reaction carbamoyl phosphate + L-aspartate = N-carbamoyl-L-aspartate + phosphate + H(+). It functions in the pathway pyrimidine metabolism; UMP biosynthesis via de novo pathway; (S)-dihydroorotate from bicarbonate: step 2/3. Functionally, catalyzes the condensation of carbamoyl phosphate and aspartate to form carbamoyl aspartate and inorganic phosphate, the committed step in the de novo pyrimidine nucleotide biosynthesis pathway. The sequence is that of Aspartate carbamoyltransferase catalytic subunit from Brucella canis (strain ATCC 23365 / NCTC 10854 / RM-666).